The primary structure comprises 193 residues: Ribosomal RNA large subunit methyltransferase E (193 aa).

The S-adenosyl-L-methionine site is built by Gly-51, Trp-53, Asp-69, Asp-85, and Asp-108. Catalysis depends on Lys-148, which acts as the Proton acceptor.

Belongs to the class I-like SAM-binding methyltransferase superfamily. RNA methyltransferase RlmE family.

It localises to the cytoplasm. It catalyses the reaction uridine(2552) in 23S rRNA + S-adenosyl-L-methionine = 2'-O-methyluridine(2552) in 23S rRNA + S-adenosyl-L-homocysteine + H(+). In terms of biological role, specifically methylates the uridine in position 2552 of 23S rRNA at the 2'-O position of the ribose in the fully assembled 50S ribosomal subunit. This is Ribosomal RNA large subunit methyltransferase E from Methanoregula boonei (strain DSM 21154 / JCM 14090 / 6A8).